An 812-amino-acid polypeptide reads, in one-letter code: Protein FAM83G (812 aa).

Alanine 2 is modified (N-acetylalanine). The interval alanine 2–leucine 312 is DUF1669. A Phosphoserine modification is found at serine 4. The tract at residues proline 76 to tyrosine 119 is disordered. A compositionally biased stretch (basic and acidic residues) spans glutamate 79–proline 90. 3 positions are modified to phosphoserine: serine 124, serine 127, and serine 356. 3 disordered regions span residues lysine 362–serine 389, alanine 455–threonine 509, and serine 521–proline 812. Positions alanine 455 to glycine 467 are enriched in polar residues. The span at cysteine 471–proline 480 shows a compositional bias: pro residues. The span at serine 545–glutamine 562 shows a compositional bias: polar residues. Residues leucine 576–tyrosine 586 show a composition bias toward acidic residues. Over residues leucine 589–serine 598 the composition is skewed to low complexity. Phosphoserine occurs at positions 609, 613, 615, and 649. A compositionally biased stretch (low complexity) spans serine 721–alanine 731. The span at leucine 761–alanine 772 shows a compositional bias: basic and acidic residues.

Belongs to the FAM83 family. Interacts with SMAD1 (via MH2 domain); in a SMAD4-independent manner. Directly interacts (via DUF1669) with casein kinase isoforms CSNK1A1 and CSNK1A1L. BMP signaling induces the phosphorylation by BMPR1A at Ser-609, Ser-613 and Ser-615. Phosphorylation at Ser-609 is necessary for the activation of SMAD4-independent BMP target genes such as NEDD9 and ASNS. In terms of processing, phosphorylated by CSNK1A1.

The protein localises to the cytoplasm. It is found in the cytosol. It localises to the nucleus. Its function is as follows. Substrate for type I BMP receptor kinase involved in regulation of some target genes of the BMP signaling pathway. Also regulates the expression of several non-BMP target genes, suggesting a role in other signaling pathways. The sequence is that of Protein FAM83G (Fam83g) from Mus musculus (Mouse).